The sequence spans 250 residues: Cell division protein ZapD (250 aa).

The protein belongs to the ZapD family. Interacts with FtsZ.

The protein localises to the cytoplasm. Functionally, cell division factor that enhances FtsZ-ring assembly. Directly interacts with FtsZ and promotes bundling of FtsZ protofilaments, with a reduction in FtsZ GTPase activity. The polypeptide is Cell division protein ZapD (Bordetella petrii (strain ATCC BAA-461 / DSM 12804 / CCUG 43448)).